A 296-amino-acid polypeptide reads, in one-letter code: Sulfotransferase 1C2 (296 aa).

49-54 provides a ligand contact to 3'-phosphoadenylyl sulfate; it reads KSGTTW. 107 to 109 is a substrate binding site; it reads RTH. His-109 (proton acceptor) is an active-site residue. 3'-phosphoadenylyl sulfate-binding positions include Arg-131, Ser-139, Tyr-194, and 228 to 233; that span reads TSFEKM. Residue Ser-139 is modified to Phosphoserine. Ser-254 carries the post-translational modification Phosphoserine. Residue 256 to 260 participates in 3'-phosphoadenylyl sulfate binding; it reads FMRKG.

This sequence belongs to the sulfotransferase 1 family. As to expression, highly expressed in kidney and at lower levels in stomach and liver. More specifically found in the epithelia of proximal tubules of the kidney, of the bile duct, of the gastric mucosa, and in hepatocytes.

It is found in the cytoplasm. The protein resides in the lysosome. The protein localises to the mitochondrion. The enzyme catalyses a phenol + 3'-phosphoadenylyl sulfate = an aryl sulfate + adenosine 3',5'-bisphosphate + H(+). The catalysed reaction is cholesterol + 3'-phosphoadenylyl sulfate = cholesterol sulfate + adenosine 3',5'-bisphosphate + H(+). Its function is as follows. Sulfotransferase that utilizes 3'-phospho-5'-adenylyl sulfate (PAPS) to catalyze the sulfate conjugation of phenolic compounds. Does not transfer sulfate to steroids, dopamine, acetaminophen, or alpha-naphthol. Except in mitochondria, where it can add sulfate to cholesterol producing cholesterol sulfate, which alters mitochondrial membrane organization, and impacts protein complex mobility increasing state-III respiration, thereby modulating mitochondrial respiration. Catalyzes the sulfation of the carcinogenic N-hydroxy-2-acetylaminofluorene leading to highly reactive intermediates capable of forming DNA adducts, potentially resulting in mutagenesis. In Rattus norvegicus (Rat), this protein is Sulfotransferase 1C2 (Sult1c2).